The sequence spans 367 residues: Phosphoribosylaminoimidazole-succinocarboxamide synthase (367 aa).

It belongs to the SAICAR synthetase family.

It carries out the reaction 5-amino-1-(5-phospho-D-ribosyl)imidazole-4-carboxylate + L-aspartate + ATP = (2S)-2-[5-amino-1-(5-phospho-beta-D-ribosyl)imidazole-4-carboxamido]succinate + ADP + phosphate + 2 H(+). Its pathway is purine metabolism; IMP biosynthesis via de novo pathway; 5-amino-1-(5-phospho-D-ribosyl)imidazole-4-carboxamide from 5-amino-1-(5-phospho-D-ribosyl)imidazole-4-carboxylate: step 1/2. The polypeptide is Phosphoribosylaminoimidazole-succinocarboxamide synthase (Shewanella putrefaciens (strain CN-32 / ATCC BAA-453)).